We begin with the raw amino-acid sequence, 165 residues long: Crossover junction endodeoxyribonuclease RuvC (165 aa).

Catalysis depends on residues Asp-8, Glu-69, and His-141. Mg(2+)-binding residues include Asp-8, Glu-69, and His-141.

The protein belongs to the RuvC family. In terms of assembly, homodimer which binds Holliday junction (HJ) DNA. The HJ becomes 2-fold symmetrical on binding to RuvC with unstacked arms; it has a different conformation from HJ DNA in complex with RuvA. In the full resolvosome a probable DNA-RuvA(4)-RuvB(12)-RuvC(2) complex forms which resolves the HJ. It depends on Mg(2+) as a cofactor.

Its subcellular location is the cytoplasm. The enzyme catalyses Endonucleolytic cleavage at a junction such as a reciprocal single-stranded crossover between two homologous DNA duplexes (Holliday junction).. The RuvA-RuvB-RuvC complex processes Holliday junction (HJ) DNA during genetic recombination and DNA repair. Endonuclease that resolves HJ intermediates. Cleaves cruciform DNA by making single-stranded nicks across the HJ at symmetrical positions within the homologous arms, yielding a 5'-phosphate and a 3'-hydroxyl group; requires a central core of homology in the junction. The consensus cleavage sequence is 5'-(A/T)TT(C/G)-3'. Cleavage occurs on the 3'-side of the TT dinucleotide at the point of strand exchange. HJ branch migration catalyzed by RuvA-RuvB allows RuvC to scan DNA until it finds its consensus sequence, where it cleaves and resolves the cruciform DNA. This Wolbachia pipientis subsp. Culex pipiens (strain wPip) protein is Crossover junction endodeoxyribonuclease RuvC.